The primary structure comprises 356 residues: Metacaspase-1 (356 aa).

The interval 1–47 (MYSGRSGAPPPAHSPYPNSYNHGPPGHSAGHNVPPPPPTQPVQFGHG) is disordered. Residues histidine 147 and cysteine 203 contribute to the active site.

It belongs to the peptidase C14B family.

Involved in cell death (apoptosis). This Ajellomyces capsulatus (strain NAm1 / WU24) (Darling's disease fungus) protein is Metacaspase-1 (MCA1).